We begin with the raw amino-acid sequence, 493 residues long: Galactose-1-phosphate uridylyltransferase (493 aa).

Belongs to the galactose-1-phosphate uridylyltransferase type 2 family.

Its subcellular location is the cytoplasm. The enzyme catalyses alpha-D-galactose 1-phosphate + UDP-alpha-D-glucose = alpha-D-glucose 1-phosphate + UDP-alpha-D-galactose. It functions in the pathway carbohydrate metabolism; galactose metabolism. The protein is Galactose-1-phosphate uridylyltransferase of Streptococcus thermophilus (strain CNRZ 1066).